Reading from the N-terminus, the 257-residue chain is Triosephosphate isomerase, cytosolic (257 aa).

Substrate contacts are provided by Asn10 and Lys12. His96 functions as the Electrophile in the catalytic mechanism. Catalysis depends on Glu167, which acts as the Proton acceptor.

Belongs to the triosephosphate isomerase family. As to quaternary structure, homodimer. As to expression, higher levels found in leaves than in roots.

Its subcellular location is the cytoplasm. The enzyme catalyses D-glyceraldehyde 3-phosphate = dihydroxyacetone phosphate. Its pathway is carbohydrate biosynthesis; gluconeogenesis. It functions in the pathway carbohydrate degradation; glycolysis; D-glyceraldehyde 3-phosphate from glycerone phosphate: step 1/1. This is Triosephosphate isomerase, cytosolic (TPI) from Stellaria longipes (Longstalk starwort).